We begin with the raw amino-acid sequence, 348 residues long: Mannonate dehydratase (348 aa).

Belongs to the mannonate dehydratase family. The cofactor is Fe(2+). It depends on Mn(2+) as a cofactor.

The enzyme catalyses D-mannonate = 2-dehydro-3-deoxy-D-gluconate + H2O. The protein operates within carbohydrate metabolism; pentose and glucuronate interconversion. Catalyzes the dehydration of D-mannonate. In Streptococcus agalactiae serotype V (strain ATCC BAA-611 / 2603 V/R), this protein is Mannonate dehydratase.